The sequence spans 54 residues: Ferredoxin (54 aa).

2 4Fe-4S ferredoxin-type domains span residues His-2–Thr-28 and Lys-29–Glu-54. Cys-8, Cys-11, Cys-14, Cys-18, Cys-36, Cys-39, Cys-42, and Cys-46 together coordinate [4Fe-4S] cluster.

[4Fe-4S] cluster is required as a cofactor.

Functionally, ferredoxins are iron-sulfur proteins that transfer electrons in a wide variety of metabolic reactions. This chain is Ferredoxin, found in Megasphaera elsdenii.